A 237-amino-acid polypeptide reads, in one-letter code: Proteasome subunit beta type-1-B (237 aa).

This sequence belongs to the peptidase T1B family. In terms of assembly, the 26S proteasome consists of a 20S proteasome core and two 19S regulatory subunits. The 20S proteasome core is composed of 28 subunits that are arranged in four stacked rings, resulting in a barrel-shaped structure. The two end rings are each formed by seven alpha subunits, and the two central rings are each formed by seven beta subunits. The catalytic chamber with the active sites is on the inside of the barrel.

Its subcellular location is the cytoplasm. The protein localises to the nucleus. Functionally, non-catalytic component of the proteasome, a multicatalytic proteinase complex which is characterized by its ability to cleave peptides with Arg, Phe, Tyr, Leu, and Glu adjacent to the leaving group at neutral or slightly basic pH. The proteasome has an ATP-dependent proteolytic activity. The sequence is that of Proteasome subunit beta type-1-B (psmb1-B) from Carassius auratus (Goldfish).